The following is a 500-amino-acid chain: Glucose-6-phosphate 1-dehydrogenase (500 aa).

NADP(+) is bound by residues 18-25, arginine 52, and lysine 155; that span reads GASGDLSK. Residues lysine 155, 185-189, glutamate 223, and aspartate 242 each bind D-glucose 6-phosphate; that span reads HYLGK. Histidine 247 (proton acceptor) is an active-site residue. An NADP(+)-binding site is contributed by lysine 338. Lysine 341 is a binding site for D-glucose 6-phosphate. The NADP(+) site is built by lysine 347, arginine 351, and arginine 373. Glutamine 375 contacts D-glucose 6-phosphate. Residues 381-383, 401-403, and tyrosine 483 each bind NADP(+); these read YFK and DLT.

It belongs to the glucose-6-phosphate dehydrogenase family.

Its subcellular location is the cytoplasm. It is found in the cytosol. It carries out the reaction D-glucose 6-phosphate + NADP(+) = 6-phospho-D-glucono-1,5-lactone + NADPH + H(+). Its pathway is carbohydrate degradation; pentose phosphate pathway; D-ribulose 5-phosphate from D-glucose 6-phosphate (oxidative stage): step 1/3. In terms of biological role, catalyzes the rate-limiting step of the oxidative pentose-phosphate pathway, which represents a route for the dissimilation of carbohydrates besides glycolysis. The main function of this enzyme is to provide reducing power (NADPH) and pentose phosphates for fatty acid and nucleic acid synthesis. The chain is Glucose-6-phosphate 1-dehydrogenase from Schizosaccharomyces pombe (strain 972 / ATCC 24843) (Fission yeast).